We begin with the raw amino-acid sequence, 177 residues long: MVDSTLIKDSNDTDTDTGVAEPAIKPHLILALDYGVKKMGMALGNSLTETARAFDILAMNNGQPDWDNLLGIIKVWGVAKVVVGLPLNMDGSSSMLSKRAHKFARRLAHRIMEQHLPVIVSLCDERLTSVAAREIAWENGWIQNERDPIDDISACILMSTYFADPNSSIAIDAIKAD.

This sequence belongs to the YqgF nuclease family.

It is found in the cytoplasm. Functionally, could be a nuclease involved in processing of the 5'-end of pre-16S rRNA. This chain is Putative pre-16S rRNA nuclease, found in Psychrobacter arcticus (strain DSM 17307 / VKM B-2377 / 273-4).